A 378-amino-acid polypeptide reads, in one-letter code: MKILVDENMPYARELFSRLGDVQAVPGRPVPAEALTDADALMVRSVTRVNEALLSGKAVKFVGTATAGTDHVDQAWLQQAGIGFSAAPGCNAIAVVEYVFSSLLMLAERDGFALRDRTVGIVGVGNVGGRLQKRLEALGIKTLLCDPPRAERGDEGDFRSLDALVQEADVLTFHTPLYKEGPYKTQHLADESLISRLKPGTILINACRGPVVDNAALLKRLEAGQPLSVVLDVWEPEPDLNVELLKRVDIGTAHIAGYTLEGKARGTTQVFEAYSAFIGHPQQVALDTLLPAPEFGRITLHGPLDQPTLKRLVHLVYDVRRDDAPLRKVAGVAGEFDKLRKNYQERREWSSLYVQCSDAQAATLLRQLGFNAVHHPVR.

Substrate is bound by residues Ser45 and Thr66. Residues Asp146 and Thr175 each coordinate NAD(+). Arg208 is an active-site residue. Asp232 serves as a coordination point for NAD(+). Residue Glu237 is part of the active site. His254 functions as the Proton donor in the catalytic mechanism. Gly257 lines the NAD(+) pocket. Tyr258 lines the substrate pocket.

It belongs to the D-isomer specific 2-hydroxyacid dehydrogenase family. PdxB subfamily. As to quaternary structure, homodimer.

It localises to the cytoplasm. The catalysed reaction is 4-phospho-D-erythronate + NAD(+) = (R)-3-hydroxy-2-oxo-4-phosphooxybutanoate + NADH + H(+). It functions in the pathway cofactor biosynthesis; pyridoxine 5'-phosphate biosynthesis; pyridoxine 5'-phosphate from D-erythrose 4-phosphate: step 2/5. Its function is as follows. Catalyzes the oxidation of erythronate-4-phosphate to 3-hydroxy-2-oxo-4-phosphonooxybutanoate. The sequence is that of Erythronate-4-phosphate dehydrogenase from Klebsiella pneumoniae (strain 342).